The sequence spans 584 residues: 2-succinyl-5-enolpyruvyl-6-hydroxy-3-cyclohexene-1-carboxylate synthase (584 aa).

This sequence belongs to the TPP enzyme family. MenD subfamily. As to quaternary structure, homodimer. Mg(2+) is required as a cofactor. The cofactor is Mn(2+). Thiamine diphosphate serves as cofactor.

The catalysed reaction is isochorismate + 2-oxoglutarate + H(+) = 5-enolpyruvoyl-6-hydroxy-2-succinyl-cyclohex-3-ene-1-carboxylate + CO2. It participates in quinol/quinone metabolism; 1,4-dihydroxy-2-naphthoate biosynthesis; 1,4-dihydroxy-2-naphthoate from chorismate: step 2/7. Its pathway is quinol/quinone metabolism; menaquinone biosynthesis. Catalyzes the thiamine diphosphate-dependent decarboxylation of 2-oxoglutarate and the subsequent addition of the resulting succinic semialdehyde-thiamine pyrophosphate anion to isochorismate to yield 2-succinyl-5-enolpyruvyl-6-hydroxy-3-cyclohexene-1-carboxylate (SEPHCHC). This is 2-succinyl-5-enolpyruvyl-6-hydroxy-3-cyclohexene-1-carboxylate synthase from Bacillus anthracis.